Reading from the N-terminus, the 487-residue chain is WAS/WASL-interacting protein family member 1 (487 aa).

Positions 1 to 14 (MPVPPPPAPPPPPT) are enriched in pro residues. Residues 1–487 (MPVPPPPAPP…GAPPLPPIPR (487 aa)) form a disordered region. The span at 21 to 31 (EKPSLNKTEQA) shows a compositional bias: polar residues. The 18-residue stretch at 32 to 49 (GRNALLSDISKGKKLKKT) folds into the WH2 domain. Arg33 is modified (asymmetric dimethylarginine). The interval 45-48 (KLKK) is binds actin. Over residues 64-100 (GAGGGYGGGSGGGGGGGSSGGGGNFGGGGPPGLGGLF) the composition is skewed to gly residues. Residues Arg121 and Arg130 each carry the omega-N-methylarginine modification. Low complexity predominate over residues 136-147 (PFSSPSGPGRFP). The residue at position 138 (Ser138) is a Phosphoserine. Composition is skewed to pro residues over residues 157 to 170 (PPEPPRNRMPPPRP) and 178 to 190 (SLPPPVPNTPRPI). The residue at position 222 (Ser222) is a Phosphoserine. Composition is skewed to pro residues over residues 234–243 (FPRPPLPPTP), 269–285 (VPPPPSQNSKPPVPSTP), and 293–309 (APPPPPPSRPGPPPLPP). Phosphoserine is present on Ser324. The segment covering 328-355 (PTPPLPSPGRSGPLPPPPTERPPPPVRD) has biased composition (pro residues). Thr329 bears the Phosphothreonine mark. Ser334 carries the post-translational modification Phosphoserine. 3 XRSGPXPPXP motif repeats span residues 336–345 (GRSGPLPPPP), 358–367 (GRSGPLPPPP), and 394–403 (PRSGPRPPLP). The span at 397 to 418 (GPRPPLPPDRPGAGAPPPPPPS) shows a compositional bias: pro residues. Over residues 419-428 (TSVRNGFQDS) the composition is skewed to polar residues. Over residues 464 to 478 (ARSESRSGSNRRERG) the composition is skewed to basic and acidic residues.

Belongs to the verprolin family. Binds to WAS within the N-terminal region, at a site distinct from the CDC42-binding site. Binds profilin and actin. Interacts with DBNL. Binds to WASL. Interacts with DBNL. Interacts with FNBP1L (via the SH3 domain). In terms of tissue distribution, isoforms were differentially expressed. One isoform was ubiquitously expressed, another was muscle-specific and another was expressed in the liver, heart and testis.

The protein localises to the cytoplasmic vesicle. It localises to the cytoplasm. Its subcellular location is the cytoskeleton. It is found in the cell projection. The protein resides in the ruffle. Plays a role in the reorganization of the actin cytoskeleton. Contributes with NCK1 and GRB2 in the recruitment and activation of WASL. Plays a role in the formation of cell ruffles. May participate in regulating the subcellular localization of WASL, resulting in the disassembly of stress fibers in favor of filopodia formation. This Rattus norvegicus (Rat) protein is WAS/WASL-interacting protein family member 1 (Wipf1).